Reading from the N-terminus, the 540-residue chain is Glucose-6-phosphate isomerase (540 aa).

Catalysis depends on E350, which acts as the Proton donor. Active-site residues include H381 and K503.

It belongs to the GPI family.

Its subcellular location is the cytoplasm. The enzyme catalyses alpha-D-glucose 6-phosphate = beta-D-fructose 6-phosphate. The protein operates within carbohydrate biosynthesis; gluconeogenesis. Its pathway is carbohydrate degradation; glycolysis; D-glyceraldehyde 3-phosphate and glycerone phosphate from D-glucose: step 2/4. Catalyzes the reversible isomerization of glucose-6-phosphate to fructose-6-phosphate. The protein is Glucose-6-phosphate isomerase of Burkholderia multivorans (strain ATCC 17616 / 249).